A 220-amino-acid chain; its full sequence is Fructose-6-phosphate aldolase (220 aa).

The Schiff-base intermediate with substrate role is filled by lysine 85.

It belongs to the transaldolase family. Type 3A subfamily. In terms of assembly, homodecamer.

It is found in the cytoplasm. The enzyme catalyses beta-D-fructose 6-phosphate = dihydroxyacetone + D-glyceraldehyde 3-phosphate. Its function is as follows. Catalyzes the reversible formation of fructose 6-phosphate from dihydroxyacetone and D-glyceraldehyde 3-phosphate via an aldolization reaction. This Enterobacter sp. (strain 638) protein is Fructose-6-phosphate aldolase.